A 1545-amino-acid polypeptide reads, in one-letter code: ATP-binding cassette sub-family C member 9 (1545 aa).

Residues methionine 1–asparagine 30 lie on the Extracellular side of the membrane. Asparagine 9 carries an N-linked (GlcNAc...) asparagine glycan. The helical transmembrane segment at leucine 31–serine 51 threads the bilayer. The Cytoplasmic segment spans residues glutamine 52 to arginine 72. A helical transmembrane segment spans residues tryptophan 73–serine 93. The Extracellular segment spans residues aspartate 94 to histidine 101. Residues leucine 102–tyrosine 122 traverse the membrane as a helical segment. Residues histidine 123 to lysine 132 are Cytoplasmic-facing. Residues leucine 133–valine 153 form a helical membrane-spanning segment. At lysine 154–phenylalanine 167 the chain is on the extracellular side. The helical transmembrane segment at cysteine 168–isoleucine 188 threads the bilayer. At arginine 189 to serine 301 the chain is on the cytoplasmic side. One can recognise an ABC transmembrane type-1 1 domain in the interval isoleucine 297–lysine 594. A helical transmembrane segment spans residues threonine 302–valine 322. The Extracellular portion of the chain corresponds to glutamine 323–asparagine 347. Asparagine 330 and asparagine 331 each carry an N-linked (GlcNAc...) asparagine glycan. Residues alanine 348 to alanine 368 traverse the membrane as a helical segment. The Cytoplasmic segment spans residues serine 369–glutamine 420. The chain crosses the membrane as a helical span at residues leucine 421–glycine 441. Residues valine 442 to serine 452 lie on the Extracellular side of the membrane. The chain crosses the membrane as a helical span at residues alanine 453–lysine 473. Topologically, residues leucine 474–threonine 528 are cytoplasmic. A helical membrane pass occupies residues phenylalanine 529–leucine 549. At alanine 550–alanine 568 the chain is on the extracellular side. A helical transmembrane segment spans residues phenylalanine 569–valine 589. Topologically, residues arginine 590–glycine 986 are cytoplasmic. The 241-residue stretch at isoleucine 668–threonine 908 folds into the ABC transporter 1 domain. Glycine 701–serine 708 is an ATP binding site. The segment at arginine 940–methionine 963 is disordered. Residues glutamate 947–asparagine 962 show a composition bias toward acidic residues. The chain crosses the membrane as a helical span at residues phenylalanine 987–isoleucine 1007. One can recognise an ABC transmembrane type-1 2 domain in the interval leucine 990–valine 1270. Over aspartate 1008–phenylalanine 1030 the chain is Extracellular. Residues tyrosine 1031 to leucine 1051 traverse the membrane as a helical segment. Residues threonine 1052–methionine 1123 are Cytoplasmic-facing. The chain crosses the membrane as a helical span at residues isoleucine 1124–phenylalanine 1144. Residues isoleucine 1145–serine 1241 lie on the Extracellular side of the membrane. The chain crosses the membrane as a helical span at residues glycine 1242–valine 1262. Residues arginine 1263–lysine 1545 lie on the Cytoplasmic side of the membrane. In terms of domain architecture, ABC transporter 2 spans isoleucine 1308–methionine 1542. An ATP-binding site is contributed by glycine 1342–serine 1349.

It belongs to the ABC transporter superfamily. ABCC family. Conjugate transporter (TC 3.A.1.208) subfamily. As to quaternary structure, interacts with KCNJ11. Interacts with KCNJ8. As to expression, expressed at high levels in heart, skeletal muscle and ovary. Moderate levels are found in brain, tongue and pancreatic islets. Low levels are found in lung, testis and adrenal gland. Expressed at very low levels in stomach, colon, thyroid and pituitary.

The protein resides in the membrane. In terms of biological role, subunit of ATP-sensitive potassium channels (KATP). Can form cardiac and smooth muscle-type KATP channels with KCNJ11. KCNJ11 forms the channel pore while ABCC9 is required for activation and regulation. Can form a sulfonylurea-sensitive but ATP-insensitive potassium channel with KCNJ8. The polypeptide is ATP-binding cassette sub-family C member 9 (Abcc9) (Rattus norvegicus (Rat)).